Here is a 415-residue protein sequence, read N- to C-terminus: Very late expression factor 1 (415 aa).

Positions 171 to 357 (REIINTILDC…DESDDNDEDD (187 aa)) constitute a Tyr recombinase domain. Catalysis depends on residues R214, K242, R307, and H330. Residues 339-415 (YLNKYDVGVD…GDDADLLSFN (77 aa)) form a disordered region. Residue Y343 is the O-(3'-phospho-DNA)-tyrosine intermediate of the active site. Positions 346–363 (GVDESDDNDEDDDDDEND) are enriched in acidic residues. Residues 375 to 404 (NISNYDINNSSSGNSSSNNTSGNDFNNNIS) are compositionally biased toward low complexity.

The protein belongs to the 'phage' integrase family.

Involved in very late gene activation. In Heliothis zea nuclear polyhedrosis virus (HzSNPV), this protein is Very late expression factor 1 (VLF-1).